The primary structure comprises 851 residues: Leucine--tRNA ligase (851 aa).

Residues 51–61 carry the 'HIGH' region motif; it reads PYPSGDLHMGH. Residues 615-619 carry the 'KMSKS' region motif; it reads KMSKS. Lys-618 contributes to the ATP binding site.

This sequence belongs to the class-I aminoacyl-tRNA synthetase family.

It is found in the cytoplasm. The catalysed reaction is tRNA(Leu) + L-leucine + ATP = L-leucyl-tRNA(Leu) + AMP + diphosphate. This Clavibacter michiganensis subsp. michiganensis (strain NCPPB 382) protein is Leucine--tRNA ligase.